Consider the following 253-residue polypeptide: 2,3-bisphosphoglycerate-dependent phosphoglycerate mutase (253 aa).

Substrate-binding positions include 12–19, 25–26, Arg64, 91–94, Lys102, 118–119, and 187–188; these read RHGESEWN, TG, ERHY, RR, and GN. Catalysis depends on His13, which acts as the Tele-phosphohistidine intermediate. The active-site Proton donor/acceptor is the Glu91.

It belongs to the phosphoglycerate mutase family. BPG-dependent PGAM subfamily.

The enzyme catalyses (2R)-2-phosphoglycerate = (2R)-3-phosphoglycerate. It functions in the pathway carbohydrate degradation; glycolysis; pyruvate from D-glyceraldehyde 3-phosphate: step 3/5. Catalyzes the interconversion of 2-phosphoglycerate and 3-phosphoglycerate. The sequence is that of 2,3-bisphosphoglycerate-dependent phosphoglycerate mutase from Streptomyces griseus subsp. griseus (strain JCM 4626 / CBS 651.72 / NBRC 13350 / KCC S-0626 / ISP 5235).